The sequence spans 164 residues: Phosphopantetheine adenylyltransferase (164 aa).

Serine 10 contacts substrate. Residues 10-11 (SF) and histidine 18 contribute to the ATP site. 3 residues coordinate substrate: lysine 42, threonine 79, and arginine 93. Residues 94-96 (GLR), glutamate 104, and 129-135 (VRPITAS) contribute to the ATP site.

Belongs to the bacterial CoaD family. Homohexamer. Requires Mg(2+) as cofactor.

It localises to the cytoplasm. The catalysed reaction is (R)-4'-phosphopantetheine + ATP + H(+) = 3'-dephospho-CoA + diphosphate. It participates in cofactor biosynthesis; coenzyme A biosynthesis; CoA from (R)-pantothenate: step 4/5. Functionally, reversibly transfers an adenylyl group from ATP to 4'-phosphopantetheine, yielding dephospho-CoA (dPCoA) and pyrophosphate. The sequence is that of Phosphopantetheine adenylyltransferase from Bradyrhizobium sp. (strain ORS 278).